A 352-amino-acid chain; its full sequence is Dysbindin (352 aa).

A Phosphoserine modification is found at Ser-11. Positions 92-180 (TSLAELQEQL…AELDTEHAQK (89 aa)) form a coiled coil. A Nuclear export signal motif is present at residues 243 to 256 (LMDLSDQEALDVFL). The interval 267–352 (SPGLEMESNP…SDQCDSTQDI (86 aa)) is disordered. Residues 274-285 (SNPSQNEMNLQI) show a composition bias toward polar residues. The span at 286 to 301 (PNPSESASQPPASPSA) shows a compositional bias: low complexity. Phosphoserine occurs at positions 340 and 343.

This sequence belongs to the dysbindin family. Interacts (via its coiled coil domain) with KXD1. Interacts with AP3B2, TRIM32, CMYA5, PI4K2 and RNF151. Interacts with the DNA-dependent protein kinase complex DNA-PK; the interaction phosphorylates DTNBP1 in vitro. Interacts directly in this complex with XRCC5 and XRCC6. Interacts with XPO1; the interaction exports DTNBP1 out of the nucleus. Component of the biogenesis of lysosome-related organelles complex 1 (BLOC-1) composed of at least BLOC1S1, BLOC1S2, BLOC1S3, BLOC1S4, BLOC1S5, BLOC1S6, DTNBP1/BLOC1S7 and SNAPIN/BLOC1S8. Interacts directly in the complex with BLOC1S5, BLOC1S6 and SNAPIN/BLOC1S8. The BLOC-1 complex associates with the AP-3 protein complex and membrane protein cargos. This BLOC-1 complex also associates with the BLOC-2 complex in endosomes. Binds to DTNA and DTNB but may not be a physiological binding partner. Interacts with AP3M1. Post-translationally, ubiquitinated by TRIM32. Ubiquitination leads to DTNBP1 degradation. Detected in hippocampus neurons (at protein level). Ubiquitously expressed. The highest expression is observed in testis, liver, kidney, brain, heart and lung. In the brain, found primarily in axon bundles and axon terminals, notably in the cerebellum and hippocampus. Expressed at lower levels in stomach, small intestine and skeletal muscle, where it is detected at the sarcolemma.

The protein localises to the cytoplasm. The protein resides in the cytoplasmic vesicle membrane. It localises to the cytoplasmic vesicle. Its subcellular location is the secretory vesicle. It is found in the synaptic vesicle membrane. The protein localises to the endosome membrane. The protein resides in the melanosome membrane. It localises to the nucleus. Its subcellular location is the postsynaptic density. It is found in the presynaptic cell membrane. The protein localises to the endoplasmic reticulum. Its function is as follows. Component of the BLOC-1 complex, a complex that is required for normal biogenesis of lysosome-related organelles (LRO), such as platelet dense granules and melanosomes. In concert with the AP-3 complex, the BLOC-1 complex is required to target membrane protein cargos into vesicles assembled at cell bodies for delivery into neurites and nerve terminals. The BLOC-1 complex, in association with SNARE proteins, is also proposed to be involved in neurite extension. Associates with the BLOC-2 complex to facilitate the transport of TYRP1 independent of AP-3 function. Plays a role in synaptic vesicle trafficking and in neurotransmitter release. Plays a role in the regulation of cell surface exposure of DRD2. May play a role in actin cytoskeleton reorganization and neurite outgrowth. May modulate MAPK8 phosphorylation. Appears to promote neuronal transmission and viability through regulating the expression of SNAP25 and SYN1, modulating PI3-kinase-Akt signaling and influencing glutamatergic release. Regulates the expression of SYN1 through binding to its promoter. Modulates prefrontal cortical activity via the dopamine/D2 pathway. The sequence is that of Dysbindin (Dtnbp1) from Rattus norvegicus (Rat).